We begin with the raw amino-acid sequence, 262 residues long: 14-3-3 protein epsilon (262 aa).

Positions 236 to 262 (QAEEVDPNAGDGEPKEQIQDVEDQDVS) are disordered. Ser-262 is modified (phosphoserine).

This sequence belongs to the 14-3-3 family. In terms of assembly, homodimer. Interacts with phosphorylated yki. Interacts with pav (when serine phosphorylated); the interaction is necessary for association of the complex pav-14-3-3epsilon complex to the microtubules, thereby inhibiting microtubule sliding.

In terms of biological role, positively regulates Ras-mediated pathways. Acts downstream or parallel to Raf, but upstream of nuclear factors in Ras signaling. Three mutants have been isolated, that suppress the rough eye phenotype caused by mutated Ras1 (sev-Ras1 v12). Inhibits yki activity by restricting its nuclear localization. Together with pav, has a role in the inhibition of microtubule sliding during neurite outgrowth. The protein is 14-3-3 protein epsilon (14-3-3epsilon) of Drosophila melanogaster (Fruit fly).